The primary structure comprises 1356 residues: DNA-directed RNA polymerase subunit beta (1356 aa).

Belongs to the RNA polymerase beta chain family. In terms of assembly, the RNAP catalytic core consists of 2 alpha, 1 beta, 1 beta' and 1 omega subunit. When a sigma factor is associated with the core the holoenzyme is formed, which can initiate transcription.

It carries out the reaction RNA(n) + a ribonucleoside 5'-triphosphate = RNA(n+1) + diphosphate. Its function is as follows. DNA-dependent RNA polymerase catalyzes the transcription of DNA into RNA using the four ribonucleoside triphosphates as substrates. This chain is DNA-directed RNA polymerase subunit beta, found in Caulobacter vibrioides (strain ATCC 19089 / CIP 103742 / CB 15) (Caulobacter crescentus).